The sequence spans 346 residues: Isopentenyl-diphosphate delta-isomerase (346 aa).

Residue 12–13 participates in substrate binding; sequence RK. Residues 67-69, serine 97, and asparagine 126 each bind FMN; that span reads ALT. Residue 97–99 participates in substrate binding; it reads SQR. Substrate is bound at residue glutamine 156. Glutamate 157 contacts Mg(2+). Residues lysine 188, threonine 218, 263-265, and 284-285 each bind FMN; these read GIR and AG.

The protein belongs to the IPP isomerase type 2 family. In terms of assembly, homooctamer. Dimer of tetramers. Requires FMN as cofactor. NADPH serves as cofactor. The cofactor is Mg(2+).

The protein resides in the cytoplasm. The enzyme catalyses isopentenyl diphosphate = dimethylallyl diphosphate. Its function is as follows. Involved in the biosynthesis of isoprenoids. Catalyzes the 1,3-allylic rearrangement of the homoallylic substrate isopentenyl (IPP) to its allylic isomer, dimethylallyl diphosphate (DMAPP). The chain is Isopentenyl-diphosphate delta-isomerase from Moorella thermoacetica (strain ATCC 39073 / JCM 9320).